Here is a 262-residue protein sequence, read N- to C-terminus: Adenosylcobinamide-GDP ribazoletransferase (262 aa).

The next 6 helical transmembrane spans lie at 43 to 63 (YFGLVGLLIGLLSAIVFWLTQ), 66 to 86 (LPAGVSVLLAMLVGVLLTGGF), 120 to 140 (GAIALILALLLKWQLLVELAL), 146 to 166 (AGSALIVAHTVSRVVAASIIF), 191 to 211 (LFILVASGVLVLLFLKGLAAL), and 242 to 262 (AAQQICEIVCYLVLLIVGSIL).

The protein belongs to the CobS family. Mg(2+) serves as cofactor.

The protein resides in the cell inner membrane. It carries out the reaction alpha-ribazole + adenosylcob(III)inamide-GDP = adenosylcob(III)alamin + GMP + H(+). It catalyses the reaction alpha-ribazole 5'-phosphate + adenosylcob(III)inamide-GDP = adenosylcob(III)alamin 5'-phosphate + GMP + H(+). Its pathway is cofactor biosynthesis; adenosylcobalamin biosynthesis; adenosylcobalamin from cob(II)yrinate a,c-diamide: step 7/7. Joins adenosylcobinamide-GDP and alpha-ribazole to generate adenosylcobalamin (Ado-cobalamin). Also synthesizes adenosylcobalamin 5'-phosphate from adenosylcobinamide-GDP and alpha-ribazole 5'-phosphate. The polypeptide is Adenosylcobinamide-GDP ribazoletransferase (Shewanella putrefaciens (strain CN-32 / ATCC BAA-453)).